A 457-amino-acid polypeptide reads, in one-letter code: Nuclear distribution protein PAC1 (457 aa).

Residues S73 to S106 are a coiled coil. 7 WD repeats span residues S126–A165, A169–I211, G216–S257, P260–T299, S322–H362, G382–S419, and L423–K457.

This sequence belongs to the WD repeat LIS1/nudF family. In terms of assembly, self-associates. Interacts with NDL1 and dynein.

The protein resides in the cytoplasm. It is found in the cytoskeleton. Its subcellular location is the spindle pole. Positively regulates the activity of the minus-end directed microtubule motor protein dynein. Plays a central role in positioning the mitotic spindle at the bud neck during cell division. Targets cytoplasmic dynein to microtubule plus ends, thereby promoting dynein-mediated microtubule sliding along the bud cortex and consequently the movement of the mitotic spindle to the bud neck. The chain is Nuclear distribution protein PAC1 from Lachancea thermotolerans (strain ATCC 56472 / CBS 6340 / NRRL Y-8284) (Yeast).